Consider the following 455-residue polypeptide: Phosphomethylpyrimidine synthase (455 aa).

Residues Asn80, Met109, Tyr139, His175, 195 to 197 (SRG), 236 to 239 (DALR), and Glu275 contribute to the substrate site. His279 is a Zn(2+) binding site. Tyr302 contributes to the substrate binding site. His343 contributes to the Zn(2+) binding site. Positions 423, 426, and 431 each coordinate [4Fe-4S] cluster.

It belongs to the ThiC family. The cofactor is [4Fe-4S] cluster.

It carries out the reaction 5-amino-1-(5-phospho-beta-D-ribosyl)imidazole + S-adenosyl-L-methionine = 4-amino-2-methyl-5-(phosphooxymethyl)pyrimidine + CO + 5'-deoxyadenosine + formate + L-methionine + 3 H(+). It participates in cofactor biosynthesis; thiamine diphosphate biosynthesis. Functionally, catalyzes the synthesis of the hydroxymethylpyrimidine phosphate (HMP-P) moiety of thiamine from aminoimidazole ribotide (AIR) in a radical S-adenosyl-L-methionine (SAM)-dependent reaction. The protein is Phosphomethylpyrimidine synthase of Synechococcus sp. (strain JA-3-3Ab) (Cyanobacteria bacterium Yellowstone A-Prime).